The following is a 134-amino-acid chain: MTIAVQTRDLSPLARARQARGTRAMLSGAAAEARVERAYRDRGCDVLATRWRGSGGEVDLIVRRGDLLVFVEVKSSASYTRAIESLSLAQLTRIQNTALEFLDRSPDLAGLEMRFDLAVVEGSGRFRVLANITM.

It belongs to the UPF0102 family.

This Dinoroseobacter shibae (strain DSM 16493 / NCIMB 14021 / DFL 12) protein is UPF0102 protein Dshi_2830.